Consider the following 205-residue polypeptide: Spermatogenesis-associated protein 24 (205 aa).

Positions 17 to 167 (LAFDQLRDVI…QKQNFRNHIS (151 aa)) form a coiled coil. The segment at 138 to 185 (EDILNGKENEIKELQQVISQQKQNFRNHISDFRIQKQQETYMAQVLDQ) is required for interaction with CBX5 and TBPL1. The interval 185–205 (QKRKKATGMRRARSRQCSREK) is disordered. Positions 186–205 (KRKKATGMRRARSRQCSREK) are enriched in basic residues.

This sequence belongs to the SPATA24 family. In terms of assembly, homodimer. Interacts with CBX3, CBX5, GMNN, GTF2B, TBPL1 and the polycomb proteins PHCF2, RNF2 and SCMH1 but not with CBX1 or PCGF2. Testis-specific (at protein level).

Its subcellular location is the cytoplasm. It localises to the nucleus. It is found in the nucleolus. The protein resides in the nucleoplasm. Its function is as follows. Binds DNA with high affinity but does not bind to TATA boxes. Synergises with GMNN and TBP in activation of TATA box-containing promoters and with GMNN and TBPL1 in activation of the NF1 TATA-less promoter. May play a role in cytoplasm movement and removal during spermiogenesis. The chain is Spermatogenesis-associated protein 24 (Spata24) from Mus musculus (Mouse).